A 231-amino-acid polypeptide reads, in one-letter code: Protein PIMREG (231 aa).

The tract at residues 1-44 is disordered; that stretch reads MASQWQGMRTSVRRRSLLKEEQLEKKEVTRSAGGHPETGPLGSL. Ser11 and Ser16 each carry phosphoserine. 2 consecutive short sequence motifs (D-box) follow at residues 14 to 17 and 53 to 56; these read RRSL and PLRA. The span at 17 to 29 shows a compositional bias: basic and acidic residues; the sequence is LLKEEQLEKKEVT. Residue Ser72 is modified to Phosphoserine. Disordered stretches follow at residues 115–138 and 152–197; these read KVRRKRGAQKDRGSPPPSLSQKNT and HLRL…DLEP. A Phosphoserine; by Uhmk1; in vitro modification is found at Ser128. Positions 178–190 are enriched in polar residues; the sequence is PCSSTEPLCSPSE. A phosphoserine mark is found at Ser191 and Ser193.

As to quaternary structure, interacts with PICALM; this interaction may target PICALM to the nucleus. During mitosis, associates with HDAC2 and MTA2 subunits of the chromatin-remodeling NuRD complex; this association is strongest at prometaphase and decreases as the cell progresses through metaphase and anaphase. In terms of processing, ubiquitinated by the anaphase-promoting complex/cyclosome (APC/C) complex in the presence of FZR1, leading to its degradation by the proteasome during mitotic exit. However, degradation is not essential for normal mitotic progression within a single cell cycle. As to expression, mainly expressed in thymus and ovary. Expressed in all T-cell subpopulations isolated from the thymus, macrophages, pro-erythrocytes, granulocytes, mast cells and progenitor cells.

It localises to the nucleus. The protein localises to the nucleolus. In terms of biological role, during mitosis, may play a role in the metaphase-to-anaphase transition. The protein is Protein PIMREG of Mus musculus (Mouse).